A 303-amino-acid polypeptide reads, in one-letter code: Lipase chaperone (303 aa).

A helical membrane pass occupies residues 7–23; the sequence is TLAAACAAWLAWWAWPD.

The protein belongs to the lipase chaperone family.

The protein resides in the cell inner membrane. Functionally, may be involved in the folding of the extracellular lipase during its passage through the periplasm. The protein is Lipase chaperone (lifO) of Chromobacterium violaceum (strain ATCC 12472 / DSM 30191 / JCM 1249 / CCUG 213 / NBRC 12614 / NCIMB 9131 / NCTC 9757 / MK).